The chain runs to 261 residues: Probable enoyl-CoA hydratase EchA17 (261 aa).

The protein belongs to the enoyl-CoA hydratase/isomerase family.

The catalysed reaction is a (3S)-3-hydroxyacyl-CoA = a (2E)-enoyl-CoA + H2O. It catalyses the reaction a 4-saturated-(3S)-3-hydroxyacyl-CoA = a (3E)-enoyl-CoA + H2O. Functionally, could possibly oxidize fatty acids using specific components. The sequence is that of Probable enoyl-CoA hydratase EchA17 (echA17) from Mycobacterium bovis (strain BCG / Pasteur 1173P2).